The chain runs to 231 residues: UMP-CMP kinase (231 aa).

ATP is bound at residue 57-62 (GSGKGT). Residues 77–106 (SAGDLLRREIASGSAYGSVILSTIREGKIV) are NMP. A ribonucleoside 5'-phosphate contacts are provided by residues Arg-83, 104–106 (KIV), and 131–134 (GFPR). A CMP-binding site is contributed by Asn-138. The segment at 169–177 (NRNQGRVDD) is LID. Residue Arg-170 participates in ATP binding. A ribonucleoside 5'-phosphate is bound by residues Arg-174 and Arg-185. An ATP-binding site is contributed by Gly-213.

It belongs to the adenylate kinase family. UMP-CMP kinase subfamily. Monomer. Mg(2+) is required as a cofactor.

Its subcellular location is the cytoplasm. The protein resides in the nucleus. The catalysed reaction is CMP + ATP = CDP + ADP. It carries out the reaction dCMP + ATP = dCDP + ADP. It catalyses the reaction UMP + ATP = UDP + ADP. Functionally, catalyzes the phosphorylation of pyrimidine nucleoside monophosphates at the expense of ATP. Plays an important role in de novo pyrimidine nucleotide biosynthesis. Has preference for UMP and CMP as phosphate acceptors. The chain is UMP-CMP kinase from Prunus armeniaca (Apricot).